We begin with the raw amino-acid sequence, 378 residues long: Erythronate-4-phosphate dehydrogenase (378 aa).

Substrate-binding residues include serine 45 and threonine 66. Positions 146 and 175 each coordinate NAD(+). Arginine 208 is a catalytic residue. Residue aspartate 232 coordinates NAD(+). Residue glutamate 237 is part of the active site. Catalysis depends on histidine 254, which acts as the Proton donor. Glycine 257 provides a ligand contact to NAD(+). Tyrosine 258 lines the substrate pocket.

It belongs to the D-isomer specific 2-hydroxyacid dehydrogenase family. PdxB subfamily. Homodimer.

Its subcellular location is the cytoplasm. It carries out the reaction 4-phospho-D-erythronate + NAD(+) = (R)-3-hydroxy-2-oxo-4-phosphooxybutanoate + NADH + H(+). Its pathway is cofactor biosynthesis; pyridoxine 5'-phosphate biosynthesis; pyridoxine 5'-phosphate from D-erythrose 4-phosphate: step 2/5. In terms of biological role, catalyzes the oxidation of erythronate-4-phosphate to 3-hydroxy-2-oxo-4-phosphonooxybutanoate. The protein is Erythronate-4-phosphate dehydrogenase of Salmonella agona (strain SL483).